A 1116-amino-acid polypeptide reads, in one-letter code: MDAPASFSLGAMGPLLRKLDSLLVAPEIRLPKPLKEGIELLKEDLEEIGVSLVEHSVVDSPTHKARFWMDEVRDLSYHIEDCIDTMFSMRSGGDDGKPRSERRHKVGRAKIDGFSKKPKPCTRMARIAELRALVREASERLERYQLGDVCGSSSPVVFTADGRARPLHHGVSANLVGVDEFKTKLNRWLSDEEGPHLKVAAIVGPAGIGKTALATELYRDHRWQFECRAFVRASRKPDMQRLLGGILSQVQRRQRSSDAYADSTVQSLIDNLREHLQDRRYLIIIDGLWETAVWNIANSAFPDVNSFSRILITADIEQVALECCGYKYDYIMRMEPLGSLDSKKVFFNKVFGSEDQCPPELKEVSNTILEKCGGLPLAIISIAGLLGSQPENPVLWDYVTKYLCSSLGTNPTLKDVVKETLNLSYNSLPHPFKTCLLYLGMYPDGHIMLKADLMKQWSAEGFVSANEAKDTEEIVDKYFDELVNRGILEPVEINKNGKVLSCTLHHAVHDLVMPKFNDDKFTMSVDYSQTITGPSTMVRRLSLHFSSTRYATKPAGIILSRVRSLAFFGLLNCMPCIGEFKLLRVLILEFWGSHGEQRSLNLIPVCRLFQLRYLKTSGDVVVQLPAQISGLQYLETLEIDARVSAVPFDLVHLPNLLHLQLQDETKLPDGIGCMRSLRTLQYFDLGNNSVDNLRGLGELTNLQDLHLSYSAPSSNEGLMINLNAITSSLSRLSNLKSLILSPGAISMVIFFDISSIISVVPVFLQRLELLPPICIFCRLPKSIGQLHKLCILKVSVRELLTTDIDNLTGLPSLTVLSLYAQTAPEGRFIFKDGTLPVLKYFKFGCGELCLAFMAGAMPNLQRLKLVFNIRKSEKYRHTLFGIEHLVSLQDIATRIGVDTSTGESDRRAAESAFKETVNKHPRCLRSSLQWVVSTEEESHPLEKQHHKREKGSSAGHGVLEKESVEDSEKNTDRVQTLLSPQLSNMESVVESALTGQRTKIVVKVHMPCGKSRAKAMALAASVNGVDSVEITGEDKDRLVVVGRGIDPVRLVALLREKCGLAELLMVELVEKEKTQLAGGKKGAYKKHPTYNLSPFDYVEYPPSAPIMQDINPCSTM.

Positions 1–177 (MDAPASFSLG…HHGVSANLVG (177 aa)) are structured coiled coil (CC) domain. Residues 182-466 (KTKLNRWLSD…WSAEGFVSAN (285 aa)) enclose the NB-ARC domain. LRR repeat units follow at residues 608-631 (LFQL…ISGL), 633-653 (YLET…LVHL), 654-675 (PNLL…GCMR), 677-701 (LRTL…ELTN), 732-755 (LSNL…DISS), 786-808 (LHKL…DNLT), 810-830 (LPSL…RFIF), 835-857 (LPVL…AGAM), and 858-882 (PNLQ…LFGI). The tract at residues 935-971 (EEESHPLEKQHHKREKGSSAGHGVLEKESVEDSEKNT) is disordered. The span at 958–971 (VLEKESVEDSEKNT) shows a compositional bias: basic and acidic residues. One can recognise an HMA domain in the interval 997–1066 (RTKIVVKVHM…KCGLAELLMV (70 aa)). The segment at 1000 to 1070 (IVVKVHMPCG…AELLMVELVE (71 aa)) is HMA-like domain.

This sequence belongs to the disease resistance NB-LRR family. As to quaternary structure, forms homodimer or heterodimer with RGA4 through its coiled coil (CC) domain. Interacts with AVR1-Pia and AVR-CO39 through its C-terminal part containing the HMA-like domain. In terms of tissue distribution, expressed in leaves.

It localises to the cytoplasm. Functionally, disease resistance (R) protein that recognizes the AVR-Pia and AVR1-CO39 effector avirulence proteins from M.oryzae. Resistance proteins guard the plant against pathogens that contain an appropriate avirulence protein via an indirect interaction with this avirulence protein. That triggers a defense system including the hypersensitive response, which restricts the pathogen growth. Contribution of RGA4 is required to recognize the effector avirulence proteins AVR-Pia and AVR1-CO39 from M.oryzae. Acts as a repressor of the RGA4-mediated cell death activation. Upon infection, recognition and binding of the AVR effectors relieve the RGA5-mediated repression and triggers the hypersensitive response. Immune response triggered by the RGA4-RGA5 -mediated recognition of AVR1-CO39 confers resistance to X.oryzae pathovars. This is Disease resistance protein RGA5 from Oryza sativa subsp. japonica (Rice).